Here is a 328-residue protein sequence, read N- to C-terminus: tRNA uridine(34) hydroxylase (328 aa).

The Rhodanese domain occupies leucine 130–glutamate 224. Cysteine 184 (cysteine persulfide intermediate) is an active-site residue.

Belongs to the TrhO family.

The catalysed reaction is uridine(34) in tRNA + AH2 + O2 = 5-hydroxyuridine(34) in tRNA + A + H2O. In terms of biological role, catalyzes oxygen-dependent 5-hydroxyuridine (ho5U) modification at position 34 in tRNAs. The chain is tRNA uridine(34) hydroxylase from Streptococcus gordonii (strain Challis / ATCC 35105 / BCRC 15272 / CH1 / DL1 / V288).